Reading from the N-terminus, the 57-residue chain is Large ribosomal subunit protein bL32 (57 aa).

This sequence belongs to the bacterial ribosomal protein bL32 family.

The protein is Large ribosomal subunit protein bL32 of Streptomyces avermitilis (strain ATCC 31267 / DSM 46492 / JCM 5070 / NBRC 14893 / NCIMB 12804 / NRRL 8165 / MA-4680).